The primary structure comprises 357 residues: N-acetyl-gamma-glutamyl-phosphate reductase (357 aa).

The active site involves Cys151.

The protein belongs to the NAGSA dehydrogenase family. Type 1 subfamily.

The protein resides in the cytoplasm. It carries out the reaction N-acetyl-L-glutamate 5-semialdehyde + phosphate + NADP(+) = N-acetyl-L-glutamyl 5-phosphate + NADPH + H(+). Its pathway is amino-acid biosynthesis; L-arginine biosynthesis; N(2)-acetyl-L-ornithine from L-glutamate: step 3/4. In terms of biological role, catalyzes the NADPH-dependent reduction of N-acetyl-5-glutamyl phosphate to yield N-acetyl-L-glutamate 5-semialdehyde. The sequence is that of N-acetyl-gamma-glutamyl-phosphate reductase from Corynebacterium kroppenstedtii (strain DSM 44385 / JCM 11950 / CIP 105744 / CCUG 35717).